Reading from the N-terminus, the 56-residue chain is Large ribosomal subunit protein bL32 (56 aa).

Residues 1–26 (MAVQKSKVTRSRRGQRRSHDALTAAA) are disordered. The span at 7–16 (KVTRSRRGQR) shows a compositional bias: basic residues.

Belongs to the bacterial ribosomal protein bL32 family.

This Moritella marina (Vibrio marinus) protein is Large ribosomal subunit protein bL32 (rpmF).